A 67-amino-acid polypeptide reads, in one-letter code: uncharacterized protein (67 aa).

A helical membrane pass occupies residues 19–39 (ISFIIFFFFYFFFFYFFYGFW).

Its subcellular location is the membrane. This is an uncharacterized protein from Dictyostelium discoideum (Social amoeba).